Consider the following 84-residue polypeptide: Putative defensin-like protein 114 (84 aa).

The first 24 residues, 1–24 (MAITKKCFAAFVLILLFVMPFVYC), serve as a signal peptide directing secretion. 4 cysteine pairs are disulfide-bonded: Cys-41–Cys-81, Cys-47–Cys-69, Cys-54–Cys-79, and Cys-58–Cys-80.

It belongs to the DEFL family.

It localises to the secreted. The protein is Putative defensin-like protein 114 of Arabidopsis thaliana (Mouse-ear cress).